We begin with the raw amino-acid sequence, 347 residues long: Haptoglobin (347 aa).

A signal peptide spans 1–18 (MRALGAVVTLLLWGQLFA). One can recognise a Sushi domain in the interval 31–88 (DSCPKPPEIANGYVEHLVRYRCRQFYKLQTEGDGIYTLNSEKQWVNPAAGDKLPKCEA). Cystine bridges form between Cys52/Cys86, Cys90/Cys207, Cys250/Cys281, and Cys292/Cys322. The 243-residue stretch at 103–345 (IIGGSMDAKG…LKDWVQETMA (243 aa)) folds into the Peptidase S1 domain. N-linked (GlcNAc...) asparagine glycans are attached at residues Asn148 and Asn152. Residues 259 to 264 (VPEKKG) are interaction with CD163.

It belongs to the peptidase S1 family. In terms of assembly, tetramer of two alpha and two beta chains; disulfide-linked. The hemoglobin/haptoglobin complex is composed of a haptoglobin dimer bound to two hemoglobin alpha-beta dimers. Interacts with CD163. Interacts with ERGIC3. In terms of tissue distribution, expressed by the liver and secreted in plasma.

The protein localises to the secreted. In terms of biological role, as a result of hemolysis, hemoglobin is found to accumulate in the kidney and is secreted in the urine. Haptoglobin captures, and combines with free plasma hemoglobin to allow hepatic recycling of heme iron and to prevent kidney damage. Haptoglobin also acts as an antioxidant, has antibacterial activity and plays a role in modulating many aspects of the acute phase response. Hemoglobin/haptoglobin complexes are rapidly cleared by the macrophage CD163 scavenger receptor expressed on the surface of liver Kupfer cells through an endocytic lysosomal degradation pathway. This chain is Haptoglobin (Hp), found in Rattus norvegicus (Rat).